We begin with the raw amino-acid sequence, 181 residues long: UPF0397 protein SSU98_0390 (181 aa).

A run of 5 helical transmembrane segments spans residues 9–29 (VVATGIGAALFVVIGHLINIP), 46–66 (LLAVVFGPVVGFLVGFIGHTL), 70–90 (LTYGPWWSWILASGVFGLVVG), 108–128 (ILFFNLVQIAANVLAWGVIAP), and 147–167 (LVAGIANSITIAIAGTLLLVV).

This sequence belongs to the UPF0397 family.

The protein resides in the cell membrane. In Streptococcus suis (strain 98HAH33), this protein is UPF0397 protein SSU98_0390.